Here is a 1263-residue protein sequence, read N- to C-terminus: Topoisomerase 1-associated factor 1 (1263 aa).

Disordered regions lie at residues 1042 to 1098 (ERQL…DDSQ) and 1178 to 1263 (VEES…DEEE). Basic residues predominate over residues 1060–1071 (TKGKARKKSKEK). Residues 1179–1189 (EESDNDDEVEE) are compositionally biased toward acidic residues. The span at 1211 to 1226 (VDTQQDLSDNTSNTSD) shows a compositional bias: polar residues.

This sequence belongs to the timeless family. Component of the fork protection complex (FPC) consisting of TOF1 and CSM3.

It localises to the nucleus. In terms of biological role, forms a fork protection complex (FPC) with CSM3 and which is required for chromosome segregation during meiosis and DNA damage repair. FPC coordinates leading and lagging strand synthesis and moves with the replication fork. FPC stabilizes replication forks in a configuration that is recognized by replication checkpoint sensors. This Candida albicans (strain SC5314 / ATCC MYA-2876) (Yeast) protein is Topoisomerase 1-associated factor 1 (YBL053).